The sequence spans 263 residues: 4-hydroxy-tetrahydrodipicolinate reductase (263 aa).

NAD(+)-binding positions include 8-13 (GACGRM), aspartate 34, 99-101 (GTT), and 125-128 (SPNY). Histidine 157 acts as the Proton donor/acceptor in catalysis. Histidine 158 serves as a coordination point for (S)-2,3,4,5-tetrahydrodipicolinate. The active-site Proton donor is the lysine 161. 167 to 168 (GT) contributes to the (S)-2,3,4,5-tetrahydrodipicolinate binding site.

It belongs to the DapB family.

Its subcellular location is the cytoplasm. It carries out the reaction (S)-2,3,4,5-tetrahydrodipicolinate + NAD(+) + H2O = (2S,4S)-4-hydroxy-2,3,4,5-tetrahydrodipicolinate + NADH + H(+). The catalysed reaction is (S)-2,3,4,5-tetrahydrodipicolinate + NADP(+) + H2O = (2S,4S)-4-hydroxy-2,3,4,5-tetrahydrodipicolinate + NADPH + H(+). Its pathway is amino-acid biosynthesis; L-lysine biosynthesis via DAP pathway; (S)-tetrahydrodipicolinate from L-aspartate: step 4/4. In terms of biological role, catalyzes the conversion of 4-hydroxy-tetrahydrodipicolinate (HTPA) to tetrahydrodipicolinate. The chain is 4-hydroxy-tetrahydrodipicolinate reductase from Methanosarcina acetivorans (strain ATCC 35395 / DSM 2834 / JCM 12185 / C2A).